We begin with the raw amino-acid sequence, 339 residues long: MTVKTRSNIAKKIEKDGGPETQYLAVDPNEIIQLQEESKKIPYKMEIVWRNVALFAALHFAAAIGLYQLIFEAKWQTVIFTFLLYVFGGFGITAGAHRLWSHKSYKATTPMRIFLMILNNIALQNDVIEWARDHRCHHKWTDTDADPHNTTRGFFFAHMGWLLVRKHPQVKEQGAKLDMSDLLSDPVLVFQRKHYFPLVILCCFILPTIIPVYFWKETAFIAFYTAGTFRYCFTLHATWCINSAAHYFGWKPYDSSITPVENVFTTIAAVGEGGHNFHHTFPQDYRTSEYSLKYNWTRVLIDTAAALGLVYDRKTACDEIIGRQVSNHGCDIQRGKSIM.

A run of 4 helical transmembrane segments spans residues 52–72, 77–97, 195–215, and 219–241; these read VALF…LIFE, TVIF…AGAH, YFPL…VYFW, and AFIA…TWCI.

It belongs to the fatty acid desaturase type 1 family. Expressed in the intestine in adult worms and in all four larval stages. Additional expression in the hypodermis in all life stages.

It is found in the membrane. The enzyme catalyses octadecanoyl-CoA + 2 Fe(II)-[cytochrome b5] + O2 + 2 H(+) = (9Z)-octadecenoyl-CoA + 2 Fe(III)-[cytochrome b5] + 2 H2O. The catalysed reaction is hexadecanoyl-CoA + 2 Fe(II)-[cytochrome b5] + O2 + 2 H(+) = (9Z)-hexadecenoyl-CoA + 2 Fe(III)-[cytochrome b5] + 2 H2O. It catalyses the reaction heptadecanoyl-CoA + 2 Fe(II)-[cytochrome b5] + O2 + 2 H(+) = (9Z)-heptadecenoyl-CoA + 2 Fe(III)-[cytochrome b5] + 2 H2O. It carries out the reaction (11E)-octadecenoyl-CoA + 2 Fe(II)-[cytochrome b5] + O2 + 2 H(+) = (9Z,11E)-octadecadienoyl-CoA + 2 Fe(III)-[cytochrome b5] + 2 H2O. Its pathway is lipid metabolism; monounsaturated fatty acid biosynthesis. The protein operates within lipid metabolism; fatty acid metabolism. In terms of biological role, delta(9)-fatty acid desaturase that acts preferentially on stearoyl-CoA (octadecanoyl-CoA) producing the monounsaturated oleoyl-CoA ((9Z)-octadecenoyl-CoA), one of the most abundant monounsaturated fatty acid in Caenorhabditis elegans phospholipids and triacylglycerols. Also acts on palmitoyl-CoA (hexadecanoyl-CoA), heptadecanoyl-CoA and (11E)-octadecenoyl-CoA (trans-vaccenoyl-CoA), the monounsaturated fatty acids (MUFAs) produced are further used as substrates to synthesize polyunsaturated fatty acids (PUFAs) by several other desaturases and elongases. Unlike plants, Caenorhabditis elegans desaturases seem to use fatty acyl-CoAs as substrates. This is Delta(9)-fatty-acid desaturase fat-6 (fat-6) from Caenorhabditis elegans.